A 1172-amino-acid polypeptide reads, in one-letter code: DNA-directed RNA polymerase subunit beta (1172 aa).

Belongs to the RNA polymerase beta chain family. In terms of assembly, the RNAP catalytic core consists of 2 alpha, 1 beta, 1 beta' and 1 omega subunit. When a sigma factor is associated with the core the holoenzyme is formed, which can initiate transcription.

The enzyme catalyses RNA(n) + a ribonucleoside 5'-triphosphate = RNA(n+1) + diphosphate. DNA-dependent RNA polymerase catalyzes the transcription of DNA into RNA using the four ribonucleoside triphosphates as substrates. In Pseudothermotoga lettingae (strain ATCC BAA-301 / DSM 14385 / NBRC 107922 / TMO) (Thermotoga lettingae), this protein is DNA-directed RNA polymerase subunit beta.